Consider the following 131-residue polypeptide: MFDISFAELVVVGIVALIVIGPERLPAVARTAGYFLGRARRYVDQVKHDLHEEMELDSLRKLRDSMHETVNSFENSVRSEINKIQETTETQSAVIPDKQPPFEKAAENIEPVNTSETKTSSAPAEPRQPNS.

A helical membrane pass occupies residues 1 to 21; that stretch reads MFDISFAELVVVGIVALIVIG. 2 stretches are compositionally biased toward polar residues: residues 71-93 and 111-131; these read NSFENSVRSEINKIQETTETQSA and PVNTSETKTSSAPAEPRQPNS. The disordered stretch occupies residues 71 to 131; the sequence is NSFENSVRSE…APAEPRQPNS (61 aa).

Belongs to the TatB family. In terms of assembly, the Tat system comprises two distinct complexes: a TatABC complex, containing multiple copies of TatA, TatB and TatC subunits, and a separate TatA complex, containing only TatA subunits. Substrates initially bind to the TatABC complex, which probably triggers association of the separate TatA complex to form the active translocon.

The protein localises to the cell inner membrane. In terms of biological role, part of the twin-arginine translocation (Tat) system that transports large folded proteins containing a characteristic twin-arginine motif in their signal peptide across membranes. Together with TatC, TatB is part of a receptor directly interacting with Tat signal peptides. TatB may form an oligomeric binding site that transiently accommodates folded Tat precursor proteins before their translocation. The protein is Sec-independent protein translocase protein TatB of Nitrosomonas europaea (strain ATCC 19718 / CIP 103999 / KCTC 2705 / NBRC 14298).